We begin with the raw amino-acid sequence, 77 residues long: Sec-independent protein translocase protein TatA (77 aa).

A helical transmembrane segment spans residues 1–21 (MGGISIWQLLIIALIVVLLFG). Composition is skewed to basic and acidic residues over residues 47–56 (EKKALEDKEA) and 65–77 (TEKK…KEQA). Residues 47–77 (EKKALEDKEAAAQTTQQATEKKPEADKKEQA) are disordered.

It belongs to the TatA/E family. The Tat system comprises two distinct complexes: a TatABC complex, containing multiple copies of TatA, TatB and TatC subunits, and a separate TatA complex, containing only TatA subunits. Substrates initially bind to the TatABC complex, which probably triggers association of the separate TatA complex to form the active translocon.

The protein localises to the cell inner membrane. Functionally, part of the twin-arginine translocation (Tat) system that transports large folded proteins containing a characteristic twin-arginine motif in their signal peptide across membranes. TatA could form the protein-conducting channel of the Tat system. This is Sec-independent protein translocase protein TatA from Shewanella amazonensis (strain ATCC BAA-1098 / SB2B).